The primary structure comprises 453 residues: Pup--protein ligase (453 aa).

A Mg(2+)-binding site is contributed by Glu9. Arg53 provides a ligand contact to ATP. Tyr55 contacts Mg(2+). Asp57 serves as the catalytic Proton acceptor. Glu63 lines the Mg(2+) pocket. Residues Thr66 and Trp420 each coordinate ATP.

It belongs to the Pup ligase/Pup deamidase family. Pup-conjugating enzyme subfamily.

It carries out the reaction ATP + [prokaryotic ubiquitin-like protein]-L-glutamate + [protein]-L-lysine = ADP + phosphate + N(6)-([prokaryotic ubiquitin-like protein]-gamma-L-glutamyl)-[protein]-L-lysine.. Its pathway is protein degradation; proteasomal Pup-dependent pathway. The protein operates within protein modification; protein pupylation. In terms of biological role, catalyzes the covalent attachment of the prokaryotic ubiquitin-like protein modifier Pup to the proteasomal substrate proteins, thereby targeting them for proteasomal degradation. This tagging system is termed pupylation. The ligation reaction involves the side-chain carboxylate of the C-terminal glutamate of Pup and the side-chain amino group of a substrate lysine. In Kribbella flavida (strain DSM 17836 / JCM 10339 / NBRC 14399), this protein is Pup--protein ligase.